The sequence spans 214 residues: Phosphatidylserine decarboxylase proenzyme (214 aa).

S182 functions as the Schiff-base intermediate with substrate; via pyruvic acid in the catalytic mechanism. S182 carries the post-translational modification Pyruvic acid (Ser); by autocatalysis.

It belongs to the phosphatidylserine decarboxylase family. PSD-A subfamily. In terms of assembly, heterodimer of a large membrane-associated beta subunit and a small pyruvoyl-containing alpha subunit. It depends on pyruvate as a cofactor. In terms of processing, is synthesized initially as an inactive proenzyme. Formation of the active enzyme involves a self-maturation process in which the active site pyruvoyl group is generated from an internal serine residue via an autocatalytic post-translational modification. Two non-identical subunits are generated from the proenzyme in this reaction, and the pyruvate is formed at the N-terminus of the alpha chain, which is derived from the carboxyl end of the proenzyme. The post-translation cleavage follows an unusual pathway, termed non-hydrolytic serinolysis, in which the side chain hydroxyl group of the serine supplies its oxygen atom to form the C-terminus of the beta chain, while the remainder of the serine residue undergoes an oxidative deamination to produce ammonia and the pyruvoyl prosthetic group on the alpha chain.

Its subcellular location is the cell membrane. The catalysed reaction is a 1,2-diacyl-sn-glycero-3-phospho-L-serine + H(+) = a 1,2-diacyl-sn-glycero-3-phosphoethanolamine + CO2. It functions in the pathway phospholipid metabolism; phosphatidylethanolamine biosynthesis; phosphatidylethanolamine from CDP-diacylglycerol: step 2/2. Its function is as follows. Catalyzes the formation of phosphatidylethanolamine (PtdEtn) from phosphatidylserine (PtdSer). In Burkholderia ambifaria (strain MC40-6), this protein is Phosphatidylserine decarboxylase proenzyme.